We begin with the raw amino-acid sequence, 464 residues long: MNEVCLKLSDLFVSSGWGGYDRGRAPQWAHPRAQQQWFGAIAALEPFLRQTLPNVGGELPGICLTGPAPVLKDAVLVRNFYQGIATPWEEFSPWPCLAGEESEWSAVPPMREIPLFPQDPLAEEQFCWLMTPQFGLLLLLGKNEQGLAQFYWTFDPEILQQAWLSLQARLKYGLSPDLSLLQKTIAAFNFPQPDFRLVTYFGQLMLDYQPNPYNLPPCQEQESAEPSPDVELLQALTHEVRTPLTSIRTLTKLLLRRKDLSPEVLKRIESIDRECSDQISRMDLIFRATELESTPLPELVVPLTVTSLEAVFQAGIPRWQKQAQRYNVNLQAQIPHSLPQVWSNPSLLDQVLGGMIEKFVRNFNGGGEINLQITTAGDQLKVQFHTQSVHQANPVRALGELLMFQPQTGCLSLNWDVTKNLFQLLGGKLIVRRRSPSEEILTIYLKCEQRTVPVANYDRQFTMV.

The 215-residue stretch at 235-449 folds into the Histidine kinase domain; that stretch reads ALTHEVRTPL…ILTIYLKCEQ (215 aa). Histidine 238 bears the Phosphohistidine; by autocatalysis mark.

Post-translationally, when expressed in E.coli autophosphorylates at 18 to 30 degrees Celsius; less phosphorylation occurs at 36 and none occurs at 42 or 48 degrees Celsius.

The enzyme catalyses ATP + protein L-histidine = ADP + protein N-phospho-L-histidine.. In terms of biological role, member of a two-component system Hik34/Rre1, controlling expression of at least 20 genes in response to hyperosmotic stress (0.5 M sorbitol) or salt (0.5 M NaCl). Represses expression of heat shock genes under normal growth conditions. Required for survival of long-term heat shock exposure. In Synechocystis sp. (strain ATCC 27184 / PCC 6803 / Kazusa), this protein is Sensor histidine kinase Hik34.